A 224-amino-acid chain; its full sequence is MINLKEQVGIKAAEFVTDGMIVGLGTGSTAYYFVQEIGRRVAEEGLQITGVTTSHATAEHAASLGIPLKNIDEVEYVDLTVDGADEVDGDFNGIKGGGAALLMEKVVAVNSKDCIWIVDESKMVQTLGAFKLPVEVVQYGAENLFRLFEKKGYRPSFRMRNGKKHITDMQNFIIDLDLRRIEDTYALAEELDRTVGVVEHGLFIGLISKVIVGTPEGPNIIEKK.

Substrate-binding positions include 26-29 (TGST), 82-85 (DGAD), and 95-98 (KGGG). The active-site Proton acceptor is the Glu104. Lys122 serves as a coordination point for substrate.

It belongs to the ribose 5-phosphate isomerase family. In terms of assembly, homodimer.

It carries out the reaction aldehydo-D-ribose 5-phosphate = D-ribulose 5-phosphate. It participates in carbohydrate degradation; pentose phosphate pathway; D-ribose 5-phosphate from D-ribulose 5-phosphate (non-oxidative stage): step 1/1. Functionally, catalyzes the reversible conversion of ribose-5-phosphate to ribulose 5-phosphate. The chain is Ribose-5-phosphate isomerase A from Streptococcus suis (strain 98HAH33).